A 296-amino-acid polypeptide reads, in one-letter code: Cytidine deaminase (296 aa).

CMP/dCMP-type deaminase domains follow at residues 47 to 167 (AESE…FGPS) and 186 to 296 (DSSD…LDPE). 88–90 (NME) is a binding site for substrate. Histidine 101 contacts Zn(2+). Catalysis depends on glutamate 103, which acts as the Proton donor. The Zn(2+) site is built by cysteine 128 and cysteine 131.

It belongs to the cytidine and deoxycytidylate deaminase family. As to quaternary structure, homodimer. The cofactor is Zn(2+).

The catalysed reaction is cytidine + H2O + H(+) = uridine + NH4(+). The enzyme catalyses 2'-deoxycytidine + H2O + H(+) = 2'-deoxyuridine + NH4(+). Functionally, this enzyme scavenges exogenous and endogenous cytidine and 2'-deoxycytidine for UMP synthesis. The protein is Cytidine deaminase of Shewanella sediminis (strain HAW-EB3).